A 327-amino-acid polypeptide reads, in one-letter code: Aspartate--ammonia ligase (327 aa).

Belongs to the class-II aminoacyl-tRNA synthetase family. AsnA subfamily.

Its subcellular location is the cytoplasm. The catalysed reaction is L-aspartate + NH4(+) + ATP = L-asparagine + AMP + diphosphate + H(+). The protein operates within amino-acid biosynthesis; L-asparagine biosynthesis; L-asparagine from L-aspartate (ammonia route): step 1/1. The sequence is that of Aspartate--ammonia ligase from Bacillus cereus (strain AH820).